The following is an 860-amino-acid chain: Eukaryotic translation initiation factor 3 subunit C (860 aa).

The interval 1-79 (MSSRFFHGGS…ESDEEEDRVT (79 aa)) is disordered. Acidic residues-rich tracts occupy residues 16–53 (SSDE…DDEA) and 67–76 (DLDESDEEED). Positions 598–772 (FHMHINLELL…NAIVFRKGVE (175 aa)) constitute a PCI domain. Residues 808-860 (AFQRDQGPGGRLGRGQGRGGQRTAGGRPPIGGQQRRPGGQQFSGGALGGAIKA) are disordered. The span at 814–830 (GPGGRLGRGQGRGGQRT) shows a compositional bias: gly residues. A compositionally biased stretch (low complexity) spans 831–847 (AGGRPPIGGQQRRPGGQ). The segment covering 848 to 860 (QFSGGALGGAIKA) has biased composition (gly residues).

This sequence belongs to the eIF-3 subunit C family. Component of the eukaryotic translation initiation factor 3 (eIF-3) complex.

The protein localises to the cytoplasm. Functionally, component of the eukaryotic translation initiation factor 3 (eIF-3) complex, which is involved in protein synthesis of a specialized repertoire of mRNAs and, together with other initiation factors, stimulates binding of mRNA and methionyl-tRNAi to the 40S ribosome. The eIF-3 complex specifically targets and initiates translation of a subset of mRNAs involved in cell proliferation. In Coccidioides immitis (strain RS) (Valley fever fungus), this protein is Eukaryotic translation initiation factor 3 subunit C.